The following is a 200-amino-acid chain: MKPYFSCVFVFCFLIKLLTGELNDLANHRMFSFHDGGVQISCNYPETVQQLKMQLFKDREVLCDLTKTKGSGNTVSIKNPMSCPYQLSNNSVSFFLDNADSSQGSYFLCSLSIFDPPPFQEKNLSGGYLLIYESQLCCQLKLWLPVGCAAFVAALLFGCIFIVWFAKKKYRSSVHDPNSEYMFMAAVNTNKKSRLAGMTS.

The N-terminal stretch at 1–20 (MKPYFSCVFVFCFLIKLLTG) is a signal peptide. The Extracellular portion of the chain corresponds to 21-145 (ELNDLANHRM…LCCQLKLWLP (125 aa)). An Ig-like V-type domain is found at 30–133 (MFSFHDGGVQ…LSGGYLLIYE (104 aa)). 2 cysteine pairs are disulfide-bonded: Cys-42/Cys-109 and Cys-63/Cys-83. Asn-89 and Asn-123 each carry an N-linked (GlcNAc...) asparagine glycan. A helical membrane pass occupies residues 146–166 (VGCAAFVAALLFGCIFIVWFA). Topologically, residues 167–200 (KKKYRSSVHDPNSEYMFMAAVNTNKKSRLAGMTS) are cytoplasmic.

In terms of assembly, homodimer; disulfide-linked. Interacts with ICOSLG. Interacts with PIK3R1. Interacts with TBK1; this interaction is critical for the maturation of T follicular regulatory cells. In terms of processing, N-glycosylated. As to expression, strongly expressed in the spleen and lung. Lower expression seen in liver, kidney and testis.

The protein localises to the cell membrane. Its function is as follows. Stimulatory receptor expressed in activated or antigen-experienced T-cells that plays an important role in the immune response. Upon binding to its ligand ICOSL expressed on antigen presenting cells (APCs), delivers costimulatory signals that enhances all basic T-cell responses to a foreign antigen, namely proliferation, secretion of lymphokines including IL10, up-regulation of molecules that mediate cell-cell interaction, and effective help for antibody secretion by B-cells. Also acts as a costimulatory receptor critical for the differentiation of T follicular regulatory cells upon immune challenges such as viral infection. Mechanistically, potentiates TCR-induced calcium flux by augmenting PLCG1 activation and actin remodeling. In addition, activates PI3K signaling pathways independently of calcium flux. Essential both for efficient interaction between T and B-cells and for normal antibody responses to T-cell dependent antigens. Prevents the apoptosis of pre-activated T-cells. Plays a critical role in CD40-mediated class switching of immunoglobin isotypes. The chain is Inducible T-cell costimulator (Icos) from Rattus norvegicus (Rat).